The chain runs to 81 residues: ATP synthase subunit C, plastid (81 aa).

2 consecutive transmembrane segments (helical) span residues 3 to 23 (PIIS…ASIG) and 57 to 77 (LAFM…LLFA).

The protein belongs to the ATPase C chain family. As to quaternary structure, F-type ATPases have 2 components, F(1) - the catalytic core - and F(0) - the membrane proton channel. F(1) has five subunits: alpha(3), beta(3), gamma(1), delta(1), epsilon(1). F(0) has four main subunits: a(1), b(1), b'(1) and c(10-14). The alpha and beta chains form an alternating ring which encloses part of the gamma chain. F(1) is attached to F(0) by a central stalk formed by the gamma and epsilon chains, while a peripheral stalk is formed by the delta, b and b' chains.

It is found in the plastid membrane. Its function is as follows. F(1)F(0) ATP synthase produces ATP from ADP in the presence of a proton or sodium gradient. F-type ATPases consist of two structural domains, F(1) containing the extramembraneous catalytic core and F(0) containing the membrane proton channel, linked together by a central stalk and a peripheral stalk. During catalysis, ATP synthesis in the catalytic domain of F(1) is coupled via a rotary mechanism of the central stalk subunits to proton translocation. Functionally, key component of the F(0) channel; it plays a direct role in translocation across the membrane. A homomeric c-ring of between 10-14 subunits forms the central stalk rotor element with the F(1) delta and epsilon subunits. The polypeptide is ATP synthase subunit C, plastid (Cuscuta gronovii (Common dodder)).